The chain runs to 256 residues: Triosephosphate isomerase (256 aa).

Substrate is bound at residue Asn9–Lys11. The Electrophile role is filled by His97. Glu169 acts as the Proton acceptor in catalysis. Substrate is bound by residues Gly175, Ser214, and Gly235 to Gly236.

It belongs to the triosephosphate isomerase family. Homodimer.

Its subcellular location is the cytoplasm. The enzyme catalyses D-glyceraldehyde 3-phosphate = dihydroxyacetone phosphate. Its pathway is carbohydrate biosynthesis; gluconeogenesis. It functions in the pathway carbohydrate degradation; glycolysis; D-glyceraldehyde 3-phosphate from glycerone phosphate: step 1/1. Functionally, involved in the gluconeogenesis. Catalyzes stereospecifically the conversion of dihydroxyacetone phosphate (DHAP) to D-glyceraldehyde-3-phosphate (G3P). The chain is Triosephosphate isomerase from Aliivibrio fischeri (strain ATCC 700601 / ES114) (Vibrio fischeri).